The primary structure comprises 189 residues: Large ribosomal subunit protein uL5 (189 aa).

It belongs to the universal ribosomal protein uL5 family. As to quaternary structure, part of the 50S ribosomal subunit; part of the 5S rRNA/L5/L18/L25 subcomplex. Contacts the 5S rRNA and the P site tRNA. Forms a bridge to the 30S subunit in the 70S ribosome.

Functionally, this is one of the proteins that bind and probably mediate the attachment of the 5S RNA into the large ribosomal subunit, where it forms part of the central protuberance. In the 70S ribosome it contacts protein S13 of the 30S subunit (bridge B1b), connecting the 2 subunits; this bridge is implicated in subunit movement. Contacts the P site tRNA; the 5S rRNA and some of its associated proteins might help stabilize positioning of ribosome-bound tRNAs. This Corynebacterium jeikeium (strain K411) protein is Large ribosomal subunit protein uL5.